A 333-amino-acid chain; its full sequence is Lipoyl synthase (333 aa).

Residues 1 to 15 (MSTLVESPVPSNDSQ) are compositionally biased toward polar residues. The interval 1–34 (MSTLVESPVPSNDSQAAAPAAYDPTQKQKSQAKT) is disordered. Positions 80, 85, 91, 106, 110, 113, and 320 each coordinate [4Fe-4S] cluster. The region spanning 91–309 (CFGKGTATFM…EREAYAMGFT (219 aa)) is the Radical SAM core domain.

The protein belongs to the radical SAM superfamily. Lipoyl synthase family. It depends on [4Fe-4S] cluster as a cofactor.

It is found in the cytoplasm. The catalysed reaction is [[Fe-S] cluster scaffold protein carrying a second [4Fe-4S](2+) cluster] + N(6)-octanoyl-L-lysyl-[protein] + 2 oxidized [2Fe-2S]-[ferredoxin] + 2 S-adenosyl-L-methionine + 4 H(+) = [[Fe-S] cluster scaffold protein] + N(6)-[(R)-dihydrolipoyl]-L-lysyl-[protein] + 4 Fe(3+) + 2 hydrogen sulfide + 2 5'-deoxyadenosine + 2 L-methionine + 2 reduced [2Fe-2S]-[ferredoxin]. Its pathway is protein modification; protein lipoylation via endogenous pathway; protein N(6)-(lipoyl)lysine from octanoyl-[acyl-carrier-protein]: step 2/2. Its function is as follows. Catalyzes the radical-mediated insertion of two sulfur atoms into the C-6 and C-8 positions of the octanoyl moiety bound to the lipoyl domains of lipoate-dependent enzymes, thereby converting the octanoylated domains into lipoylated derivatives. This Bordetella parapertussis (strain 12822 / ATCC BAA-587 / NCTC 13253) protein is Lipoyl synthase.